We begin with the raw amino-acid sequence, 84 residues long: UPF0386 protein Oant_1614 (84 aa).

The protein belongs to the UPF0386 family.

The sequence is that of UPF0386 protein Oant_1614 from Brucella anthropi (strain ATCC 49188 / DSM 6882 / CCUG 24695 / JCM 21032 / LMG 3331 / NBRC 15819 / NCTC 12168 / Alc 37) (Ochrobactrum anthropi).